Reading from the N-terminus, the 422-residue chain is UPF0229 protein SO_2883 (422 aa).

Residues 60–111 form a disordered region; the sequence is SEPMFHQGKGGVRDRVHPGNDQFTRGDKIDRPQGGSGGGAGKGDASDSGEGN. Basic and acidic residues predominate over residues 70 to 90; that stretch reads GVRDRVHPGNDQFTRGDKIDR.

Belongs to the UPF0229 family.

In Shewanella oneidensis (strain ATCC 700550 / JCM 31522 / CIP 106686 / LMG 19005 / NCIMB 14063 / MR-1), this protein is UPF0229 protein SO_2883.